We begin with the raw amino-acid sequence, 30 residues long: SFLNFFKGAAKNLLAAGLDKLKCKISGTQC.

Residues Cys23 and Cys30 are joined by a disulfide bond.

In terms of tissue distribution, expressed by the skin glands.

The protein resides in the secreted. Its function is as follows. Antimicrobial peptide. Active against Gram-negative bacterium E.coli (MIC=12.5 uM) and against Gram-positive bacterium S.aureus (MIC=50 uM). The protein is Ranatuerin-2OK of Nidirana okinavana (Kampira Falls frog).